A 348-amino-acid polypeptide reads, in one-letter code: Holliday junction branch migration complex subunit RuvB (348 aa).

Residues 4–186 form a large ATPase domain (RuvB-L) region; sequence TDRIISANTV…FGIIQRLEFY (183 aa). ATP is bound by residues Ile-25, Arg-26, Gly-67, Lys-70, Thr-71, Thr-72, 133–135, Arg-176, Tyr-186, and Arg-223; that span reads EDY. Thr-71 is a Mg(2+) binding site. A small ATPAse domain (RuvB-S) region spans residues 187-257; that stretch reads SVDDLAKIVY…IADKALTMLK (71 aa). A head domain (RuvB-H) region spans residues 260-348; sequence PVGFDHMDHK…SSDQQQNLSL (89 aa). Positions 315 and 320 each coordinate DNA.

This sequence belongs to the RuvB family. In terms of assembly, homohexamer. Forms an RuvA(8)-RuvB(12)-Holliday junction (HJ) complex. HJ DNA is sandwiched between 2 RuvA tetramers; dsDNA enters through RuvA and exits via RuvB. An RuvB hexamer assembles on each DNA strand where it exits the tetramer. Each RuvB hexamer is contacted by two RuvA subunits (via domain III) on 2 adjacent RuvB subunits; this complex drives branch migration. In the full resolvosome a probable DNA-RuvA(4)-RuvB(12)-RuvC(2) complex forms which resolves the HJ.

It is found in the cytoplasm. The catalysed reaction is ATP + H2O = ADP + phosphate + H(+). In terms of biological role, the RuvA-RuvB-RuvC complex processes Holliday junction (HJ) DNA during genetic recombination and DNA repair, while the RuvA-RuvB complex plays an important role in the rescue of blocked DNA replication forks via replication fork reversal (RFR). RuvA specifically binds to HJ cruciform DNA, conferring on it an open structure. The RuvB hexamer acts as an ATP-dependent pump, pulling dsDNA into and through the RuvAB complex. RuvB forms 2 homohexamers on either side of HJ DNA bound by 1 or 2 RuvA tetramers; 4 subunits per hexamer contact DNA at a time. Coordinated motions by a converter formed by DNA-disengaged RuvB subunits stimulates ATP hydrolysis and nucleotide exchange. Immobilization of the converter enables RuvB to convert the ATP-contained energy into a lever motion, pulling 2 nucleotides of DNA out of the RuvA tetramer per ATP hydrolyzed, thus driving DNA branch migration. The RuvB motors rotate together with the DNA substrate, which together with the progressing nucleotide cycle form the mechanistic basis for DNA recombination by continuous HJ branch migration. Branch migration allows RuvC to scan DNA until it finds its consensus sequence, where it cleaves and resolves cruciform DNA. The polypeptide is Holliday junction branch migration complex subunit RuvB (Francisella philomiragia subsp. philomiragia (strain ATCC 25017 / CCUG 19701 / FSC 153 / O#319-036)).